The following is a 385-amino-acid chain: Ribosomal RNA large subunit methyltransferase G (385 aa).

The protein belongs to the methyltransferase superfamily. RlmG family.

The protein resides in the cytoplasm. The catalysed reaction is guanosine(1835) in 23S rRNA + S-adenosyl-L-methionine = N(2)-methylguanosine(1835) in 23S rRNA + S-adenosyl-L-homocysteine + H(+). Specifically methylates the guanine in position 1835 (m2G1835) of 23S rRNA. The sequence is that of Ribosomal RNA large subunit methyltransferase G from Vibrio campbellii (strain ATCC BAA-1116).